Consider the following 366-residue polypeptide: Type 2A phosphatase-associated protein 42 (366 aa).

The interval 318–366 (RVLQGGEEPEQAPDEENMDWQDRETYKAREWDEFKESHAKGSGNTMNRG) is disordered. Residues 324-336 (EEPEQAPDEENMD) are compositionally biased toward acidic residues. Residues 337–356 (WQDRETYKAREWDEFKESHA) show a composition bias toward basic and acidic residues.

This sequence belongs to the IGBP1/TAP42 family. In terms of assembly, associates with the PP2a (PPH21 and PPH22) and SIT4 protein phosphatase catalytic subunits. Interacts with PPG1, PPH3 and TIP41. Post-translationally, phosphorylated by TOR kinases. Dephosphorylated by CDC55, TPD3 and SIT4.

Involved in negative regulation of the TOR signaling pathway in response to type of available nitrogen source. Inhibitor of PP2A phosphatase SIT4, which results in inhibition of nuclear export of MSN2, due to lack of dephosphorylation by SIT4. Also required for rapamycin induced activation of expression of many nitrogen discrimination pathway (NDP) genes. In complex with PPH21, required for organization of the actin cytoskeletom during the cell cycle via a Rho GTPase-dependent mechanism. This is Type 2A phosphatase-associated protein 42 (TAP42) from Saccharomyces cerevisiae (strain ATCC 204508 / S288c) (Baker's yeast).